The primary structure comprises 127 residues: NADPH-dependent 7-cyano-7-deazaguanine reductase (127 aa).

Cysteine 40 serves as the catalytic Thioimide intermediate. The Proton donor role is filled by aspartate 47. Substrate is bound by residues 62–64 (VEL) and 81–82 (HE).

It belongs to the GTP cyclohydrolase I family. QueF type 1 subfamily.

The protein localises to the cytoplasm. It carries out the reaction 7-aminomethyl-7-carbaguanine + 2 NADP(+) = 7-cyano-7-deazaguanine + 2 NADPH + 3 H(+). It participates in tRNA modification; tRNA-queuosine biosynthesis. Catalyzes the NADPH-dependent reduction of 7-cyano-7-deazaguanine (preQ0) to 7-aminomethyl-7-deazaguanine (preQ1). This Campylobacter jejuni subsp. jejuni serotype O:6 (strain 81116 / NCTC 11828) protein is NADPH-dependent 7-cyano-7-deazaguanine reductase.